The chain runs to 324 residues: Anthranilate phosphoribosyltransferase (324 aa).

5-phospho-alpha-D-ribose 1-diphosphate-binding positions include G72, G75 to D76, T80, N82 to T85, K99 to S107, and S111. Residue G72 participates in anthranilate binding. Residue S84 participates in Mg(2+) binding. Residue N102 coordinates anthranilate. Anthranilate is bound at residue R157. Residues D215 and E216 each coordinate Mg(2+).

This sequence belongs to the anthranilate phosphoribosyltransferase family. Homodimer. It depends on Mg(2+) as a cofactor.

It catalyses the reaction N-(5-phospho-beta-D-ribosyl)anthranilate + diphosphate = 5-phospho-alpha-D-ribose 1-diphosphate + anthranilate. Its pathway is amino-acid biosynthesis; L-tryptophan biosynthesis; L-tryptophan from chorismate: step 2/5. In terms of biological role, catalyzes the transfer of the phosphoribosyl group of 5-phosphorylribose-1-pyrophosphate (PRPP) to anthranilate to yield N-(5'-phosphoribosyl)-anthranilate (PRA). The polypeptide is Anthranilate phosphoribosyltransferase (Pyrococcus furiosus (strain ATCC 43587 / DSM 3638 / JCM 8422 / Vc1)).